We begin with the raw amino-acid sequence, 246 residues long: tRNA pseudouridine synthase A (246 aa).

D53 serves as the catalytic Nucleophile. Residue Y111 participates in substrate binding.

Belongs to the tRNA pseudouridine synthase TruA family. Homodimer.

The catalysed reaction is uridine(38/39/40) in tRNA = pseudouridine(38/39/40) in tRNA. Functionally, formation of pseudouridine at positions 38, 39 and 40 in the anticodon stem and loop of transfer RNAs. The chain is tRNA pseudouridine synthase A from Lysinibacillus sphaericus (strain C3-41).